The chain runs to 157 residues: 6,7-dimethyl-8-ribityllumazine synthase (157 aa).

5-amino-6-(D-ribitylamino)uracil is bound by residues Phe23, 57–59, and 81–83; these read AFE and AVI. 86–87 is a binding site for (2S)-2-hydroxy-3-oxobutyl phosphate; that stretch reads ST. His89 serves as the catalytic Proton donor. Phe114 serves as a coordination point for 5-amino-6-(D-ribitylamino)uracil. A (2S)-2-hydroxy-3-oxobutyl phosphate-binding site is contributed by Arg128.

Belongs to the DMRL synthase family.

The catalysed reaction is (2S)-2-hydroxy-3-oxobutyl phosphate + 5-amino-6-(D-ribitylamino)uracil = 6,7-dimethyl-8-(1-D-ribityl)lumazine + phosphate + 2 H2O + H(+). The protein operates within cofactor biosynthesis; riboflavin biosynthesis; riboflavin from 2-hydroxy-3-oxobutyl phosphate and 5-amino-6-(D-ribitylamino)uracil: step 1/2. Its function is as follows. Catalyzes the formation of 6,7-dimethyl-8-ribityllumazine by condensation of 5-amino-6-(D-ribitylamino)uracil with 3,4-dihydroxy-2-butanone 4-phosphate. This is the penultimate step in the biosynthesis of riboflavin. This is 6,7-dimethyl-8-ribityllumazine synthase from Desulfosudis oleivorans (strain DSM 6200 / JCM 39069 / Hxd3) (Desulfococcus oleovorans).